The following is a 206-amino-acid chain: Protein PH0010 (206 aa).

The AMMECR1 domain maps to Glu8–Arg202.

This is Protein PH0010 from Pyrococcus horikoshii (strain ATCC 700860 / DSM 12428 / JCM 9974 / NBRC 100139 / OT-3).